The following is a 490-amino-acid chain: Vacuolar amino acid transporter 7 (490 aa).

Over 1–6 (MEATSS) the chain is Cytoplasmic. A helical transmembrane segment spans residues 7–27 (ALSSTANLVKTIVGAGTLAIP). The Vacuolar portion of the chain corresponds to 28 to 34 (YSFKSDG). A helical transmembrane segment spans residues 35–55 (VLVGVILTLLAAVTSGLGLFV). Residues 56 to 84 (LSKCSKTLINPRNSSFFTLCMLTYPTLAP) lie on the Cytoplasmic side of the membrane. A helical transmembrane segment spans residues 85–105 (IFDLAMIVQCFGVGLSYLVLI). Over 106-108 (GDL) the chain is Vacuolar. A helical membrane pass occupies residues 109 to 129 (FPGLFGGERNYWIIASAVIII). The Cytoplasmic segment spans residues 130–143 (PLCLVKKLDQLKYS). Residues 144–164 (SILGLFALAYISILVFSHFVF) form a helical membrane-spanning segment. The Vacuolar segment spans residues 165-190 (ELGKGELTNILRNDICWWKIHDFKGL). A helical membrane pass occupies residues 191–211 (LSTFSIIIFAFTGSMNLFPMI). The Cytoplasmic segment spans residues 212-221 (NELKDNSMEN). Residues 222–242 (ITFVINNSISLSTALFLIVGL) traverse the membrane as a helical segment. At 243 to 264 (SGYLTFGNETLGNLMLNYDPNS) the chain is on the vacuolar side. A helical transmembrane segment spans residues 265 to 285 (IWIVIGKFCLGSMLILSFPLL). Over 286–397 (FHPLRIAVNN…FVKSRFYWIT (112 aa)) the chain is Cytoplasmic. Positions 355 to 374 (NGNFDNGSIESQENNNDERG) are disordered. Residues 357–368 (NFDNGSIESQEN) show a composition bias toward polar residues. A helical transmembrane segment spans residues 398–418 (ALLLISMYTLALSVQSFALVL). Residues 419-428 (SFVGATGSTS) are Vacuolar-facing. Residues 429–449 (ISFTLPGLLGYKLIGLDSLAI) form a helical membrane-spanning segment. Over 450-463 (GKMIPPKDRFYKRC) the chain is Cytoplasmic. Residues 464–484 (SLLLVFYGLSVMFLSLYVTVF) form a helical membrane-spanning segment. Residues 485–490 (NRSDEA) are Vacuolar-facing.

This sequence belongs to the amino acid/polyamine transporter 2 family.

The protein localises to the vacuole membrane. Functionally, probable amino acid transporter of unknown specificity. This Saccharomyces cerevisiae (strain ATCC 204508 / S288c) (Baker's yeast) protein is Vacuolar amino acid transporter 7 (AVT7).